Consider the following 666-residue polypeptide: MADMEDLFGSDADSEAERKDSDSGSDSDSDQENAASGSNASGSESDQDERGDSGQPSNKELFGDDSEDEGASHHSGSDNHSERSDNRSEASERSDHEDNDPSDVDQHSGSEAPNDDEDEGHRSDGGSHHSEAEGSEKAHSDDEKWGREDKSDQSDDEKIQNSDDEERAQGSDEDKLQNSDDDEKMQNTDDEERPQLSDDERQQLSEEEKANSDDERPVASDNDDEKQNSDDEEQPQLSDEEKMQNSDDERPQASDEEHRHSDDEEEQDHKSESARGSDSEDEVLRMKRKNAIASDSEADSDTEVPKDNSGTMDLFGGADDISSGSDGEDKPPTPGQPVDENGLPQDQQEEEPIPETRIEVEIPKVNTDLGNDLYFVKLPNFLSVEPRPFDPQYYEDEFEDEEMLDEEGRTRLKLKVENTIRWRIRRDEEGNEIKESNARIVKWSDGSMSLHLGNEVFDVYKAPLQGDHNHLFIRQGTGLQGQAVFKTKLTFRPHSTDSATHRKMTLSLADRCSKTQKIRILPMAGRDPECQRTEMIKKEEERLRASIRRESQQRRMREKQHQRGLSASYLEPDRYDEEEEGEESISLAAIKNRYKGGIREERARIYSSDSDEGSEEDKAQRLLKAKKLTSDEEGEPSGKRKAEDDDKANKKHKKYVISDEEEEDDD.

The segment covering 1–14 has biased composition (acidic residues); the sequence is MADMEDLFGSDADS. Disordered regions lie at residues 1 to 357, 547 to 583, and 602 to 666; these read MADM…PETR, IRRESQQRRMREKQHQRGLSASYLEPDRYDEEEEGEE, and RARI…EDDD. A2 carries the post-translational modification N-acetylalanine. Residues S10 and S14 each carry the phosphoserine modification. Low complexity predominate over residues 32-44; it reads ENAASGSNASGSE. Position 66 is a phosphoserine (S66). Basic and acidic residues-rich tracts occupy residues 70 to 96 and 119 to 178; these read GASHHSGSDNHSERSDNRSEASERSDH and EGHR…KLQN. Residues S151, S154, S162, S171, and S179 each carry the phosphoserine modification. The segment covering 179–192 has biased composition (acidic residues); the sequence is SDDDEKMQNTDDEE. T188 is modified (phosphothreonine). Positions 193 to 218 are enriched in basic and acidic residues; it reads RPQLSDDERQQLSEEEKANSDDERPV. Phosphoserine occurs at positions 197, 205, 212, 220, 229, 238, 246, 254, 277, 279, 294, 296, and 300. Basic and acidic residues predominate over residues 239–285; it reads DEEKMQNSDDERPQASDEEHRHSDDEEEQDHKSESARGSDSEDEVLR. The segment covering 316 to 325 has biased composition (low complexity); that stretch reads GGADDISSGS. Positions 547–561 are enriched in basic and acidic residues; it reads IRRESQQRRMREKQH. The span at 574-583 shows a compositional bias: acidic residues; sequence RYDEEEEGEE. The residue at position 606 (Y606) is a Phosphotyrosine. Phosphoserine occurs at positions 607, 608, 610, and 614. T629 is modified (phosphothreonine). S630 carries the phosphoserine modification. Basic and acidic residues predominate over residues 636–648; the sequence is PSGKRKAEDDDKA. S658 carries the phosphoserine modification.

The protein belongs to the LEO1 family. In terms of assembly, component of the PAF1 complex, which consists of CDC73, PAF1, LEO1, CTR9, RTF1 and SKIC8. The PAF1 complex interacts with PHF5A. Interacts with TCEA1, SUPT5H and CTNNB1. Interacts with SETD5. (Microbial infection) The PAF1 complex interacts with Zika virus French Polynesia 10087PF/2013 non-structural protein 5/NS5. The interaction with viral NS5 proteins may reduce the antiviral immune response by inhibiting the recruitment of the PAF1 complex to interferon-stimulated genes, thus preventing their transcription. As to quaternary structure, (Microbial infection) The PAF1 complex interacts with Dengue virus DENV2 16681 non-structural protein 5/NS5. The PAF1 complex interacts with Dengue virus DENV4 Dominica/814669/1981 non-structural protein 5/NS5. The interaction with viral NS5 proteins may reduce the antiviral immune response by inhibiting the recruitment of the PAF1 complex to interferon-stimulated genes, thus preventing their transcription. Highly expressed in skeletal muscle and heart. Weakly expressed in placenta and liver.

The protein localises to the nucleus. Its function is as follows. Component of the PAF1 complex (PAF1C) which has multiple functions during transcription by RNA polymerase II and is implicated in regulation of development and maintenance of embryonic stem cell pluripotency. PAF1C associates with RNA polymerase II through interaction with POLR2A CTD non-phosphorylated and 'Ser-2'- and 'Ser-5'-phosphorylated forms and is involved in transcriptional elongation, acting both independently and synergistically with TCEA1 and in cooperation with the DSIF complex and HTATSF1. PAF1C is required for transcription of Hox and Wnt target genes. PAF1C is involved in hematopoiesis and stimulates transcriptional activity of KMT2A/MLL1; it promotes leukemogenesis through association with KMT2A/MLL1-rearranged oncoproteins, such as KMT2A/MLL1-MLLT3/AF9 and KMT2A/MLL1-MLLT1/ENL. PAF1C is involved in histone modifications such as ubiquitination of histone H2B and methylation on histone H3 'Lys-4' (H3K4me3). PAF1C recruits the RNF20/40 E3 ubiquitin-protein ligase complex and the E2 enzyme UBE2A or UBE2B to chromatin which mediate monoubiquitination of 'Lys-120' of histone H2B (H2BK120ub1); UB2A/B-mediated H2B ubiquitination is proposed to be coupled to transcription. PAF1C is involved in mRNA 3' end formation probably through association with cleavage and poly(A) factors. In case of infection by influenza A strain H3N2, PAF1C associates with viral NS1 protein, thereby regulating gene transcription. Involved in polyadenylation of mRNA precursors. Connects PAF1C to Wnt signaling. In Homo sapiens (Human), this protein is RNA polymerase-associated protein LEO1 (LEO1).